We begin with the raw amino-acid sequence, 349 residues long: Protein RecA (349 aa).

66-73 (GPESSGKT) contributes to the ATP binding site.

This sequence belongs to the RecA family.

The protein resides in the cytoplasm. In terms of biological role, can catalyze the hydrolysis of ATP in the presence of single-stranded DNA, the ATP-dependent uptake of single-stranded DNA by duplex DNA, and the ATP-dependent hybridization of homologous single-stranded DNAs. It interacts with LexA causing its activation and leading to its autocatalytic cleavage. The polypeptide is Protein RecA (Psychrobacter sp. (strain PRwf-1)).